The following is a 60-amino-acid chain: UPF0434 protein Bpro_2950 (60 aa).

Belongs to the UPF0434 family.

The sequence is that of UPF0434 protein Bpro_2950 from Polaromonas sp. (strain JS666 / ATCC BAA-500).